The following is a 350-amino-acid chain: Probable aldo-keto reductase 1 (350 aa).

The Proton donor role is filled by Y67. H135 lines the substrate pocket. 214–224 contributes to the NADP(+) binding site; that stretch reads SPLGKGFFSSG.

Belongs to the aldo/keto reductase family.

The protein is Probable aldo-keto reductase 1 of Oryza sativa subsp. indica (Rice).